A 199-amino-acid polypeptide reads, in one-letter code: Ras-related protein Rab-7b (199 aa).

GTP contacts are provided by residues 15–22, 34–40, 63–67, 124–127, and 154–155; these read GAIGVGKT, YEEYQTT, DTGGQ, NKID, and AK. Short sequence motifs (switch) lie at residues 28 to 41 and 67 to 82; these read YVHKTFYEEYQTTL and QERFRSMVSTFYKGSD. At serine 186 the chain carries Phosphoserine. Residues cysteine 198 and cysteine 199 are each lipidated (S-geranylgeranyl cysteine).

This sequence belongs to the small GTPase superfamily. Rab family. As to expression, expressed in heart, placenta, lung, skeletal muscle and peripheral blood leukocyte.

It is found in the late endosome. Its subcellular location is the lysosome. It localises to the golgi apparatus. The protein resides in the trans-Golgi network. The protein localises to the cytoplasmic vesicle. It is found in the phagosome. Its subcellular location is the phagosome membrane. In terms of biological role, controls vesicular trafficking from endosomes to the trans-Golgi network (TGN). Acts as a negative regulator of TLR9 signaling and can suppress TLR9-triggered TNFA, IL6, and IFNB production in macrophages by promoting TLR9 lysosomal degradation. Also negatively regulates TLR4 signaling in macrophages by promoting lysosomal degradation of TLR4. Promotes megakaryocytic differentiation by increasing NF-kappa-B-dependent IL6 production and subsequently enhancing the association of STAT3 with GATA1. Not involved in the regulation of the EGF- and EGFR degradation pathway. The protein is Ras-related protein Rab-7b (RAB7B) of Homo sapiens (Human).